Here is a 146-residue protein sequence, read N- to C-terminus: Hemoglobin cathodic subunit beta (146 aa).

One can recognise a Globin domain in the interval 2–146 (QWSSSERSVI…VVSGLSKQYF (145 aa)). His-63 is a heme b binding site.

As to quaternary structure, heterotetramer of two alpha and two beta chains. As to expression, red blood cells.

In terms of biological role, involved in oxygen transport from the gills to various peripheral tissues. The protein is Hemoglobin cathodic subunit beta of Ophisurus serpens (Serpent eel).